The sequence spans 714 residues: Elongation factor G-like protein (714 aa).

One can recognise a tr-type G domain in the interval 21-289 (GGVRNVVLVG…VATRGFPSPM (269 aa)). Residues 30-37 (GPSGGGKT) are G1. Residue 30 to 37 (GPSGGGKT) participates in GTP binding. Residues 73-77 (QRSVG) are G2. The tract at residues 94 to 97 (DTPG) is G3. GTP contacts are provided by residues 94–98 (DTPGY) and 148–151 (TKLD). Residues 148-151 (TKLD) are G4. The segment at 267 to 269 (CSS) is G5.

It belongs to the TRAFAC class translation factor GTPase superfamily. Classic translation factor GTPase family. EF-G/EF-2 subfamily.

This chain is Elongation factor G-like protein, found in Mycobacterium tuberculosis (strain ATCC 25618 / H37Rv).